The sequence spans 147 residues: Transcriptional repressor NrdR (147 aa).

A zinc finger lies at 3-34 (CLFCRSDDTKVIDSRTSEDGISIRRRRECQLC). Residues 46-136 (LTVIKRNGTS…VYQDFDSLED (91 aa)) enclose the ATP-cone domain.

The protein belongs to the NrdR family. Zn(2+) serves as cofactor.

In terms of biological role, negatively regulates transcription of bacterial ribonucleotide reductase nrd genes and operons by binding to NrdR-boxes. The chain is Transcriptional repressor NrdR from Tropheryma whipplei (strain TW08/27) (Whipple's bacillus).